The chain runs to 270 residues: NAD kinase (270 aa).

Asp49 serves as the catalytic Proton acceptor. NAD(+)-binding positions include 49–50 (DG), Arg54, 126–127 (NE), Arg152, Asp154, 165–170 (TAYNKS), Ala189, and Gln227.

This sequence belongs to the NAD kinase family. A divalent metal cation serves as cofactor.

The protein resides in the cytoplasm. The catalysed reaction is NAD(+) + ATP = ADP + NADP(+) + H(+). Functionally, involved in the regulation of the intracellular balance of NAD and NADP, and is a key enzyme in the biosynthesis of NADP. Catalyzes specifically the phosphorylation on 2'-hydroxyl of the adenosine moiety of NAD to yield NADP. The polypeptide is NAD kinase (Lactococcus lactis subsp. cremoris (strain MG1363)).